The following is a 62-amino-acid chain: Large ribosomal subunit protein bL35 (62 aa).

The tract at residues 25–62 (EQAYRSHLSQNKTTKQKRQARKSVQMHSSDVKRFKALI) is disordered. The span at 53 to 62 (SDVKRFKALI) shows a compositional bias: basic and acidic residues.

Belongs to the bacterial ribosomal protein bL35 family.

This is Large ribosomal subunit protein bL35 from Mycoplasmopsis fermentans (Mycoplasma fermentans).